Consider the following 104-residue polypeptide: L-rhamnose mutarotase (104 aa).

Y18 serves as a coordination point for substrate. H22 functions as the Proton donor in the catalytic mechanism. Substrate-binding positions include Y41 and 76–77 (WW).

Belongs to the rhamnose mutarotase family. As to quaternary structure, homodimer.

It is found in the cytoplasm. The enzyme catalyses alpha-L-rhamnose = beta-L-rhamnose. It participates in carbohydrate metabolism; L-rhamnose metabolism. Involved in the anomeric conversion of L-rhamnose. This is L-rhamnose mutarotase from Escherichia coli O8 (strain IAI1).